The primary structure comprises 466 residues: Soluble pyridine nucleotide transhydrogenase (466 aa).

Position 36–45 (36–45) interacts with FAD; sequence EKESSVGGGC.

Belongs to the class-I pyridine nucleotide-disulfide oxidoreductase family. FAD serves as cofactor.

The protein resides in the cytoplasm. The enzyme catalyses NAD(+) + NADPH = NADH + NADP(+). Conversion of NADPH, generated by peripheral catabolic pathways, to NADH, which can enter the respiratory chain for energy generation. The sequence is that of Soluble pyridine nucleotide transhydrogenase from Vibrio parahaemolyticus serotype O3:K6 (strain RIMD 2210633).